Reading from the N-terminus, the 97-residue chain is DNA/RNA-binding protein Alba (97 aa).

N6-acetyllysine is present on lysine 15.

The protein belongs to the histone-like Alba family. Acetylated. Acetylation at Lys-15 decreases DNA-binding affinity.

It localises to the cytoplasm. Its subcellular location is the chromosome. Binds double-stranded DNA tightly but without sequence specificity. Involved in DNA compaction. This chain is DNA/RNA-binding protein Alba, found in Sulfolobus acidocaldarius (strain ATCC 33909 / DSM 639 / JCM 8929 / NBRC 15157 / NCIMB 11770).